The sequence spans 61 residues: uncharacterized protein (61 aa).

Residues 34-61 (TDVEDIDRLISMLDDLEAKYERFKKDWE) are a coiled coil.

This is an uncharacterized protein from Bacillus subtilis (strain 168).